The following is a 201-amino-acid chain: Recombination protein RecR (201 aa).

A C4-type zinc finger spans residues 57 to 72 (CADCRTFTEQEHCTIC). The region spanning 81 to 176 (GQICVVESPA…LASRIAHGVP (96 aa)) is the Toprim domain.

The protein belongs to the RecR family.

In terms of biological role, may play a role in DNA repair. It seems to be involved in an RecBC-independent recombinational process of DNA repair. It may act with RecF and RecO. The protein is Recombination protein RecR of Yersinia pestis bv. Antiqua (strain Antiqua).